The primary structure comprises 1380 residues: Protein TORNADO 1 (1380 aa).

LRR repeat units follow at residues 26–46 (FFNLQTLSFSSSGNTTHCQLI), 47–70 (TESSMNINVTRDNLTSLSQIFIEL), 105–132 (TSKIKQLAFRKNRFSEQCLNELSEILKR), 161–184 (NDSLEELQIWEDSIGSKGAEELSR), 266–289 (NTTVRSLDMTGAKLNSRWAKEFRW), 299–322 (EVKLSKTGLKDKAVVYIAAGLFKN), 323–346 (KSLQSLYVDGNRFGSVGVEDLLCP), 348–371 (SRFSALQLQANITLRSIVFGGSNT), 446–472 (INPLIEEIDLARTPLQDSGKADEIYQK), and 476–502 (NGRKIDEAETDDSLKDMPLTEPKSVRA). The Roc domain occupies 493–702 (PLTEPKSVRA…HHIRMTSKAI (210 aa)). Residues 506–513 (GQNYAGKT) and 567–571 (NLAGQ) each bind GTP. Residues 574–594 (FFALHDLMFPSPCFFLIVLSL) form a helical membrane-spanning segment. LRR repeat units follow at residues 640-665 (LTHSEKINLQSESFQATVGCIQRLRD), 688-712 (VSKLTHHIRMTSKAILQRVPRVYQL), 799-826 (LTQLIKLDVRKQSTGERNGFVSRKELEK), 1023-1046 (QSQFVSLHRLKEALSSVPAETMYD), 1131-1154 (EAVLQRLKIIEQEIRDLKQEIQGL), and 1229-1254 (QLGCDVMQIDNQAVKCLAPYMTNFMK). 641 to 644 (THSE) contributes to the GTP binding site. Positions 757-931 (NIQIVETRRH…LQVHLHNRIM (175 aa)) constitute a COR domain. The next 2 helical transmembrane spans lie at 1255-1275 (LVTFALRIGANWAAGMGHMIP) and 1287-1307 (PAVMTGAAGAAGAIGVAAALG).

In terms of tissue distribution, expressed in seedlings, roots, leaves, stems and flowers. Present in ovules, prominently in nucellus and integuments.

The protein resides in the membrane. Involved in the basipetal transport of auxin (IAA) that modulates growth and organs organization. Required for initial divisions in the epidermal/lateral root cap leading to the formation of epidermal cells and a clone of lateral root cap cells, as well as for the maintenance of the radial pattern of cell specification in the root, thus regulating the distinction between the lateral root cap and epidermis. The polypeptide is Protein TORNADO 1 (TRN1) (Arabidopsis thaliana (Mouse-ear cress)).